A 301-amino-acid polypeptide reads, in one-letter code: Haloalkane dehalogenase (301 aa).

The region spanning 47-284 (PPIVLLHGEP…INASHFIQED (238 aa)) is the AB hydrolase-1 domain. Catalysis depends on Asp123, which acts as the Nucleophile. The active-site Proton donor is Asp250. The Proton acceptor role is filled by His279.

It belongs to the haloalkane dehalogenase family. Type 1 subfamily. Monomer.

The enzyme catalyses 1-haloalkane + H2O = a halide anion + a primary alcohol + H(+). Its function is as follows. Catalyzes hydrolytic cleavage of carbon-halogen bonds in halogenated aliphatic compounds, leading to the formation of the corresponding primary alcohols, halide ions and protons. This Mycolicibacterium paratuberculosis (strain ATCC BAA-968 / K-10) (Mycobacterium paratuberculosis) protein is Haloalkane dehalogenase.